A 340-amino-acid chain; its full sequence is UDP-N-acetylenolpyruvoylglucosamine reductase (340 aa).

Residues 11-181 enclose the FAD-binding PCMH-type domain; the sequence is ISVKAKKIIS…VAIGLKLKKK (171 aa). Residue Arg156 is part of the active site. Ser227 functions as the Proton donor in the catalytic mechanism. Glu323 is a catalytic residue.

It belongs to the MurB family. Requires FAD as cofactor.

The protein resides in the cytoplasm. The catalysed reaction is UDP-N-acetyl-alpha-D-muramate + NADP(+) = UDP-N-acetyl-3-O-(1-carboxyvinyl)-alpha-D-glucosamine + NADPH + H(+). Its pathway is cell wall biogenesis; peptidoglycan biosynthesis. Cell wall formation. This is UDP-N-acetylenolpyruvoylglucosamine reductase from Wigglesworthia glossinidia brevipalpis.